Here is a 203-residue protein sequence, read N- to C-terminus: Large ribosomal subunit protein bL25 (203 aa).

The protein belongs to the bacterial ribosomal protein bL25 family. CTC subfamily. Part of the 50S ribosomal subunit; part of the 5S rRNA/L5/L18/L25 subcomplex. Contacts the 5S rRNA. Binds to the 5S rRNA independently of L5 and L18.

This is one of the proteins that binds to the 5S RNA in the ribosome where it forms part of the central protuberance. In Cupriavidus pinatubonensis (strain JMP 134 / LMG 1197) (Cupriavidus necator (strain JMP 134)), this protein is Large ribosomal subunit protein bL25.